Reading from the N-terminus, the 125-residue chain is CLAVATA3/ESR (CLE)-related protein ESR3 (125 aa).

Residues 1 to 26 (MASRMGMVAIMSLFVYAIVVPTSVNA) form the signal peptide. Positions 45 to 125 (QQQGGFIGHR…IGPPPLPDRY (81 aa)) are disordered. 2 positions are modified to hydroxyproline: P75 and P78. A glycan (O-linked (Ara...) hydroxyproline) is linked at P78.

This sequence belongs to the CLV3/ESR signal peptide family. Post-translationally, the O-glycosylation (arabinosylation) of the hydroxyproline Pro-78 enhances binding affinity of the ESR3p peptide for its receptor. As to expression, seed endosperm.

The protein resides in the secreted. It localises to the extracellular space. Its function is as follows. Extracellular signal peptide that regulates cell fate. The protein is CLAVATA3/ESR (CLE)-related protein ESR3 of Zea mays (Maize).